A 93-amino-acid chain; its full sequence is C-C motif chemokine 14 (93 aa).

A signal peptide spans 1–19; that stretch reads MKISVAAIPFFLLITIALG. O-linked (GalNAc...) serine; partial glycosylation is present at Ser26. Cystine bridges form between Cys35-Cys59 and Cys36-Cys75.

It belongs to the intercrine beta (chemokine CC) family. In terms of processing, the N-terminal processed forms HCC-1(3-74), HCC-1(4-74) and HCC-1(9-74) are produced in small amounts by proteolytic cleavage after secretion in blood. Post-translationally, HCC-1(1-74), but not HCC-1(3-74) and HCC-1(4-74), is partially O-glycosylated; the O-linked glycan consists of one Gal-GalNAc disaccharide, further modified by two N-acetylneuraminic acids. Expressed constitutively in several normal tissues: spleen, liver, skeletal and heart muscle, gut, and bone marrow, present at high concentrations (1-80 nM) in plasma.

Its subcellular location is the secreted. Functionally, has weak activities on human monocytes and acts via receptors that also recognize MIP-1 alpha. It induces intracellular Ca(2+) changes and enzyme release, but no chemotaxis, at concentrations of 100-1,000 nM, and is inactive on T-lymphocytes, neutrophils, and eosinophil leukocytes. Enhances the proliferation of CD34 myeloid progenitor cells. The processed form HCC-1(9-74) is a chemotactic factor that attracts monocytes, eosinophils, and T-cells and is a ligand for CCR1, CCR3 and CCR5. The chain is C-C motif chemokine 14 (CCL14) from Homo sapiens (Human).